The primary structure comprises 202 residues: LexA repressor (202 aa).

Positions 32 to 52 (RAEVCSAFGFKSPNAAETHLR) form a DNA-binding region, H-T-H motif. Catalysis depends on for autocatalytic cleavage activity residues Ser-121 and Lys-158.

Belongs to the peptidase S24 family. As to quaternary structure, homodimer.

It catalyses the reaction Hydrolysis of Ala-|-Gly bond in repressor LexA.. Functionally, represses a number of genes involved in the response to DNA damage (SOS response), including recA and lexA. In the presence of single-stranded DNA, RecA interacts with LexA causing an autocatalytic cleavage which disrupts the DNA-binding part of LexA, leading to derepression of the SOS regulon and eventually DNA repair. The protein is LexA repressor of Azoarcus sp. (strain BH72).